A 288-amino-acid chain; its full sequence is 4-diphosphocytidyl-2-C-methyl-D-erythritol kinase (288 aa).

The active site involves Lys-8. 90-100 (PVGAGLAGGSS) contacts ATP. The active site involves Asp-132.

The protein belongs to the GHMP kinase family. IspE subfamily.

The enzyme catalyses 4-CDP-2-C-methyl-D-erythritol + ATP = 4-CDP-2-C-methyl-D-erythritol 2-phosphate + ADP + H(+). It participates in isoprenoid biosynthesis; isopentenyl diphosphate biosynthesis via DXP pathway; isopentenyl diphosphate from 1-deoxy-D-xylulose 5-phosphate: step 3/6. Functionally, catalyzes the phosphorylation of the position 2 hydroxy group of 4-diphosphocytidyl-2C-methyl-D-erythritol. This chain is 4-diphosphocytidyl-2-C-methyl-D-erythritol kinase, found in Chlamydia trachomatis serovar A (strain ATCC VR-571B / DSM 19440 / HAR-13).